The primary structure comprises 74 residues: Protein SlyX homolog (74 aa).

This sequence belongs to the SlyX family.

The sequence is that of Protein SlyX homolog from Neisseria meningitidis serogroup A / serotype 4A (strain DSM 15465 / Z2491).